The chain runs to 61 residues: uncharacterized protein (61 aa).

Residues 10-61 (YEEENDNEDFEEEVELSREDLNQIINELAPFLIKLLTDLTELTQKKEESENE) are a coiled coil.

This is an uncharacterized protein from Acidianus bottle-shaped virus (isolate Italy/Pozzuoli) (ABV).